Reading from the N-terminus, the 209-residue chain is Ribosomal RNA large subunit methyltransferase E (209 aa).

S-adenosyl-L-methionine is bound by residues glycine 63, tryptophan 65, aspartate 83, aspartate 99, and aspartate 124. The Proton acceptor role is filled by lysine 164.

It belongs to the class I-like SAM-binding methyltransferase superfamily. RNA methyltransferase RlmE family.

Its subcellular location is the cytoplasm. The enzyme catalyses uridine(2552) in 23S rRNA + S-adenosyl-L-methionine = 2'-O-methyluridine(2552) in 23S rRNA + S-adenosyl-L-homocysteine + H(+). Its function is as follows. Specifically methylates the uridine in position 2552 of 23S rRNA at the 2'-O position of the ribose in the fully assembled 50S ribosomal subunit. The chain is Ribosomal RNA large subunit methyltransferase E from Shewanella woodyi (strain ATCC 51908 / MS32).